The following is a 225-amino-acid chain: Putative 5'-nucleotidase alr3139 (225 aa).

A divalent metal cation contacts are provided by Asp8, Asp9, Ser37, and Asn88.

This sequence belongs to the SurE nucleotidase family. A divalent metal cation is required as a cofactor.

It localises to the cytoplasm. It carries out the reaction a ribonucleoside 5'-phosphate + H2O = a ribonucleoside + phosphate. Its function is as follows. Nucleotidase that shows phosphatase activity on nucleoside 5'-monophosphates. The polypeptide is Putative 5'-nucleotidase alr3139 (Synechocystis sp. (strain ATCC 27184 / PCC 6803 / Kazusa)).